The chain runs to 140 residues: Nucleoside diphosphate kinase (140 aa).

The ATP site is built by Lys-11, Phe-59, Arg-87, Thr-93, Arg-104, and Asn-114. His-117 serves as the catalytic Pros-phosphohistidine intermediate.

The protein belongs to the NDK family. As to quaternary structure, homotetramer. Mg(2+) is required as a cofactor.

It localises to the cytoplasm. It catalyses the reaction a 2'-deoxyribonucleoside 5'-diphosphate + ATP = a 2'-deoxyribonucleoside 5'-triphosphate + ADP. The enzyme catalyses a ribonucleoside 5'-diphosphate + ATP = a ribonucleoside 5'-triphosphate + ADP. Its function is as follows. Major role in the synthesis of nucleoside triphosphates other than ATP. The ATP gamma phosphate is transferred to the NDP beta phosphate via a ping-pong mechanism, using a phosphorylated active-site intermediate. This chain is Nucleoside diphosphate kinase, found in Rickettsia canadensis (strain McKiel).